We begin with the raw amino-acid sequence, 331 residues long: DSC E3 ubiquitin ligase complex subunit D (331 aa).

Asn26 is a glycosylation site (N-linked (GlcNAc...) asparagine). A run of 3 helical transmembrane segments spans residues 63–83 (ILIYCELSALYYMDCSVILFA), 107–127 (PFIGAIFVSNIFCMIFHNFFT), and 159–179 (LFLLDFLVLILDLVMLGLIVE). Residues 197–214 (VQDHDSEERGVHRTRPES) show a composition bias toward basic and acidic residues. A disordered region spans residues 197–225 (VQDHDSEERGVHRTRPESRSSVVGAELDE).

In terms of assembly, component of the DSC E3 ubiquitin ligase complex composed of dscA, dscB, dscC and dscD.

Its subcellular location is the endoplasmic reticulum membrane. It functions in the pathway protein modification; protein ubiquitination. Its function is as follows. Component of the DSC E3 ubiquitin ligase complex which is required for the srbA transcriptional activator proteolytic cleavage to release the soluble transcription factor from the membrane in low oxygen or sterol conditions. Required for growth during hypoxia and triazole drug susceptibility, as well as for virulence in a murine model of invasive pulmonary aspergillosis (IPA). The sequence is that of DSC E3 ubiquitin ligase complex subunit D from Aspergillus fumigatus (strain CBS 144.89 / FGSC A1163 / CEA10) (Neosartorya fumigata).